The primary structure comprises 444 residues: Glutamate-1-semialdehyde 2,1-aminomutase (444 aa).

Lys267 bears the N6-(pyridoxal phosphate)lysine mark.

It belongs to the class-III pyridoxal-phosphate-dependent aminotransferase family. HemL subfamily. In terms of assembly, homodimer. Pyridoxal 5'-phosphate serves as cofactor.

Its subcellular location is the cytoplasm. The catalysed reaction is (S)-4-amino-5-oxopentanoate = 5-aminolevulinate. It participates in porphyrin-containing compound metabolism; protoporphyrin-IX biosynthesis; 5-aminolevulinate from L-glutamyl-tRNA(Glu): step 2/2. This chain is Glutamate-1-semialdehyde 2,1-aminomutase, found in Xylella fastidiosa (strain Temecula1 / ATCC 700964).